The primary structure comprises 368 residues: tRNA-specific 2-thiouridylase MnmA (368 aa).

Residues 6–13 (ALSGGVDS) and Met-32 contribute to the ATP site. Cys-92 functions as the Nucleophile in the catalytic mechanism. A disulfide bridge connects residues Cys-92 and Cys-186. Residue Gly-116 coordinates ATP. Positions 134–136 (KDQ) are interaction with tRNA. Cys-186 (cysteine persulfide intermediate) is an active-site residue. Positions 292-293 (RY) are interaction with tRNA.

Belongs to the MnmA/TRMU family.

It localises to the cytoplasm. The catalysed reaction is S-sulfanyl-L-cysteinyl-[protein] + uridine(34) in tRNA + AH2 + ATP = 2-thiouridine(34) in tRNA + L-cysteinyl-[protein] + A + AMP + diphosphate + H(+). Functionally, catalyzes the 2-thiolation of uridine at the wobble position (U34) of tRNA, leading to the formation of s(2)U34. The chain is tRNA-specific 2-thiouridylase MnmA from Campylobacter hominis (strain ATCC BAA-381 / DSM 21671 / CCUG 45161 / LMG 19568 / NCTC 13146 / CH001A).